The chain runs to 58 residues: Large ribosomal subunit protein eL24 (58 aa).

Zn(2+)-binding residues include Cys6, Cys9, Cys32, and Cys36. The C4-type zinc finger occupies 6–36 (CSFCGYDIEPGTGKMYVRRDGRVFYFCSGKC).

The protein belongs to the eukaryotic ribosomal protein eL24 family. In terms of assembly, part of the 50S ribosomal subunit. Forms a cluster with proteins L3 and L14. The cofactor is Zn(2+).

Functionally, binds to the 23S rRNA. The chain is Large ribosomal subunit protein eL24 from Archaeoglobus fulgidus (strain ATCC 49558 / DSM 4304 / JCM 9628 / NBRC 100126 / VC-16).